The sequence spans 103 residues: uncharacterized protein (103 aa).

Disordered regions lie at residues methionine 1 to glycine 20 and leucine 44 to glycine 71. The signal sequence occupies residues methionine 1–alanine 34.

This is an uncharacterized protein from Mycobacterium tuberculosis (strain CDC 1551 / Oshkosh).